Consider the following 78-residue polypeptide: NEDD8-like protein RUB3 (78 aa).

Gly-76 is covalently cross-linked (Glycyl lysine isopeptide (Gly-Lys) (interchain with K-? in acceptor proteins)). A propeptide spanning residues 77–78 is cleaved from the precursor; the sequence is CC.

In terms of tissue distribution, detected in stems and flower buds, but not in leaves, mature flowers and seedlings.

Functionally, may function as a stable post-translational protein modifier. This chain is NEDD8-like protein RUB3 (RUB3), found in Arabidopsis thaliana (Mouse-ear cress).